The chain runs to 286 residues: Phosphatidylserine decarboxylase proenzyme (286 aa).

Residues Asp-91, His-148, and Ser-251 each act as charge relay system; for autoendoproteolytic cleavage activity in the active site. Ser-251 (schiff-base intermediate with substrate; via pyruvic acid; for decarboxylase activity) is an active-site residue. Residue Ser-251 is modified to Pyruvic acid (Ser); by autocatalysis.

This sequence belongs to the phosphatidylserine decarboxylase family. PSD-B subfamily. Prokaryotic type I sub-subfamily. As to quaternary structure, heterodimer of a large membrane-associated beta subunit and a small pyruvoyl-containing alpha subunit. Pyruvate is required as a cofactor. In terms of processing, is synthesized initially as an inactive proenzyme. Formation of the active enzyme involves a self-maturation process in which the active site pyruvoyl group is generated from an internal serine residue via an autocatalytic post-translational modification. Two non-identical subunits are generated from the proenzyme in this reaction, and the pyruvate is formed at the N-terminus of the alpha chain, which is derived from the carboxyl end of the proenzyme. The autoendoproteolytic cleavage occurs by a canonical serine protease mechanism, in which the side chain hydroxyl group of the serine supplies its oxygen atom to form the C-terminus of the beta chain, while the remainder of the serine residue undergoes an oxidative deamination to produce ammonia and the pyruvoyl prosthetic group on the alpha chain. During this reaction, the Ser that is part of the protease active site of the proenzyme becomes the pyruvoyl prosthetic group, which constitutes an essential element of the active site of the mature decarboxylase.

It is found in the cell membrane. It carries out the reaction a 1,2-diacyl-sn-glycero-3-phospho-L-serine + H(+) = a 1,2-diacyl-sn-glycero-3-phosphoethanolamine + CO2. It participates in phospholipid metabolism; phosphatidylethanolamine biosynthesis; phosphatidylethanolamine from CDP-diacylglycerol: step 2/2. Its function is as follows. Catalyzes the formation of phosphatidylethanolamine (PtdEtn) from phosphatidylserine (PtdSer). The protein is Phosphatidylserine decarboxylase proenzyme of Marinobacter nauticus (strain ATCC 700491 / DSM 11845 / VT8) (Marinobacter aquaeolei).